The following is a 95-amino-acid chain: Aspartyl/glutamyl-tRNA(Asn/Gln) amidotransferase subunit C (95 aa).

This sequence belongs to the GatC family. In terms of assembly, heterotrimer of A, B and C subunits.

The enzyme catalyses L-glutamyl-tRNA(Gln) + L-glutamine + ATP + H2O = L-glutaminyl-tRNA(Gln) + L-glutamate + ADP + phosphate + H(+). The catalysed reaction is L-aspartyl-tRNA(Asn) + L-glutamine + ATP + H2O = L-asparaginyl-tRNA(Asn) + L-glutamate + ADP + phosphate + 2 H(+). Its function is as follows. Allows the formation of correctly charged Asn-tRNA(Asn) or Gln-tRNA(Gln) through the transamidation of misacylated Asp-tRNA(Asn) or Glu-tRNA(Gln) in organisms which lack either or both of asparaginyl-tRNA or glutaminyl-tRNA synthetases. The reaction takes place in the presence of glutamine and ATP through an activated phospho-Asp-tRNA(Asn) or phospho-Glu-tRNA(Gln). The sequence is that of Aspartyl/glutamyl-tRNA(Asn/Gln) amidotransferase subunit C from Methylobacterium nodulans (strain LMG 21967 / CNCM I-2342 / ORS 2060).